A 195-amino-acid chain; its full sequence is Thymidylate kinase (195 aa).

7–14 (GVDTCGKS) is a binding site for ATP.

This sequence belongs to the thymidylate kinase family.

It catalyses the reaction dTMP + ATP = dTDP + ADP. Functionally, phosphorylation of dTMP to form dTDP in both de novo and salvage pathways of dTTP synthesis. The polypeptide is Thymidylate kinase (Helicobacter hepaticus (strain ATCC 51449 / 3B1)).